We begin with the raw amino-acid sequence, 331 residues long: Ribosomal RNA small subunit methyltransferase C (331 aa).

The protein belongs to the methyltransferase superfamily. RsmC family. As to quaternary structure, monomer.

It localises to the cytoplasm. The catalysed reaction is guanosine(1207) in 16S rRNA + S-adenosyl-L-methionine = N(2)-methylguanosine(1207) in 16S rRNA + S-adenosyl-L-homocysteine + H(+). Its function is as follows. Specifically methylates the guanine in position 1207 of 16S rRNA in the 30S particle. In Ectopseudomonas mendocina (strain ymp) (Pseudomonas mendocina), this protein is Ribosomal RNA small subunit methyltransferase C.